The chain runs to 365 residues: Succinate--CoA ligase [ADP-forming] subunit beta (365 aa).

One can recognise an ATP-grasp domain in the interval K9–F230. ATP contacts are provided by residues K45, G52–G54, E90, I93, and E98. 2 residues coordinate Mg(2+): N190 and D203. Substrate-binding positions include N244 and G300–T302.

It belongs to the succinate/malate CoA ligase beta subunit family. Heterotetramer of two alpha and two beta subunits. Mg(2+) is required as a cofactor.

It carries out the reaction succinate + ATP + CoA = succinyl-CoA + ADP + phosphate. The enzyme catalyses GTP + succinate + CoA = succinyl-CoA + GDP + phosphate. The protein operates within carbohydrate metabolism; tricarboxylic acid cycle; succinate from succinyl-CoA (ligase route): step 1/1. In terms of biological role, succinyl-CoA synthetase functions in the citric acid cycle (TCA), coupling the hydrolysis of succinyl-CoA to the synthesis of either ATP or GTP and thus represents the only step of substrate-level phosphorylation in the TCA. The beta subunit provides nucleotide specificity of the enzyme and binds the substrate succinate, while the binding sites for coenzyme A and phosphate are found in the alpha subunit. The polypeptide is Succinate--CoA ligase [ADP-forming] subunit beta (Methanothermobacter thermautotrophicus (strain ATCC 29096 / DSM 1053 / JCM 10044 / NBRC 100330 / Delta H) (Methanobacterium thermoautotrophicum)).